The chain runs to 87 residues: Large ribosomal subunit protein bL27 (87 aa).

Residues 1–21 form a disordered region; that stretch reads MAHKKAGGSSRNGRDSESKRL.

Belongs to the bacterial ribosomal protein bL27 family.

In Burkholderia ambifaria (strain MC40-6), this protein is Large ribosomal subunit protein bL27.